Consider the following 250-residue polypeptide: Glycerol-1-phosphate phosphohydrolase 1 (250 aa).

Asp-18 (nucleophile) is an active-site residue. Positions 18 and 20 each coordinate Mg(2+). Asp-20 functions as the Proton donor in the catalytic mechanism. A Glycyl lysine isopeptide (Lys-Gly) (interchain with G-Cter in SUMO); alternate cross-link involves residue Lys-64. Lys-64 participates in a covalent cross-link: Glycyl lysine isopeptide (Lys-Gly) (interchain with G-Cter in ubiquitin); alternate. At Ser-90 the chain carries Phosphoserine. A Glycyl lysine isopeptide (Lys-Gly) (interchain with G-Cter in ubiquitin) cross-link involves residue Lys-144. A Mg(2+)-binding site is contributed by Asp-179.

Belongs to the HAD-like hydrolase superfamily. DOG/GPP family. Monomer. Mg(2+) is required as a cofactor.

It is found in the cytoplasm. Its subcellular location is the nucleus. It carries out the reaction sn-glycerol 1-phosphate + H2O = glycerol + phosphate. The catalysed reaction is sn-glycerol 3-phosphate + H2O = glycerol + phosphate. Its function is as follows. Major isoform of glycerol-1-phosphate phosphohydrolase involved in glycerol biosynthesis. Plays a role in osmoadaptation and required for adaptation to anaerobic conditions. The chain is Glycerol-1-phosphate phosphohydrolase 1 from Saccharomyces cerevisiae (strain ATCC 204508 / S288c) (Baker's yeast).